Here is a 99-residue protein sequence, read N- to C-terminus: Protein dpy-30 homolog (99 aa).

Methionine 1 carries the N-acetylmethionine modification. A disordered region spans residues 1–26 (MESEQMLEGQTQVAENPHSEYGLTDS). Serine 19 carries the post-translational modification Phosphoserine. Lysine 35 bears the N6-acetyllysine; alternate mark. Lysine 35 participates in a covalent cross-link: Glycyl lysine isopeptide (Lys-Gly) (interchain with G-Cter in SUMO2); alternate.

Belongs to the dpy-30 family. Homodimer. Core component of several methyltransferase-containing complexes including MLL1/MLL, MLL2/3 (also named ASCOM complex) and MLL4/WBP7. Each complex is at least composed of ASH2L, RBBP5, WDR5, DPY30, one or more specific histone methyltransferases (KMT2A/MLL1, KMT2D/MLL2, KMT2C/MLL3 and KMT2B/MLL4), and the facultative components MEN1, HCFC1, HCFC2, NCOA6, KDM6A, PAXIP1/PTIP, PAGR1 and alpha- and beta-tubulin PAXIP1/PTIP, PAGR1 and alpha- and beta-tubulin. Interacts with ASH2L. The interaction with ASH2L is direct. Interacts with ARFGEF1. Component of the SET1 complex, at least composed of the catalytic subunit (SETD1A or SETD1B), WDR5, WDR82, RBBP5, ASH2L/ASH2, CXXC1/CFP1, HCFC1 and DPY30.

The protein resides in the nucleus. Its subcellular location is the golgi apparatus. It localises to the trans-Golgi network. In terms of biological role, as part of the MLL1/MLL complex, involved in the methylation of histone H3 at 'Lys-4', particularly trimethylation. Histone H3 'Lys-4' methylation represents a specific tag for epigenetic transcriptional activation. May play some role in histone H3 acetylation. In embryonic stem (ES) cells, plays a crucial role in the differentiation potential, particularly along the neural lineage, regulating gene induction and histone H3 'Lys-4' methylation at key developmental loci, including that mediated by retinoic acid. Does not affect ES cell self-renewal. May also play an indirect or direct role in endosomal transport. This chain is Protein dpy-30 homolog (Dpy30), found in Mus musculus (Mouse).